Here is a 603-residue protein sequence, read N- to C-terminus: Geraniol synthase, chloroplastic (603 aa).

A chloroplast-targeting transit peptide spans methionine 1–proline 50. 5 residues coordinate (2E)-geranyl diphosphate: arginine 301, aspartate 338, aspartate 342, arginine 479, and aspartate 482. Residues aspartate 338 and aspartate 342 each contribute to the Mg(2+) site. The DDXXD motif motif lies at aspartate 338–aspartate 342. Mg(2+) is bound by residues aspartate 482, threonine 486, and glutamate 490.

This sequence belongs to the terpene synthase family. Tpsb subfamily. Homodimer. Requires Mg(2+) as cofactor. Mn(2+) serves as cofactor. Expressed in the oil cells of the leaves.

The protein resides in the plastid. It is found in the chloroplast. It carries out the reaction (2E)-geranyl diphosphate + H2O = (2E)-geraniol + diphosphate. It functions in the pathway secondary metabolite biosynthesis; terpenoid biosynthesis. In terms of biological role, monoterpene synthase that catalyzes the formation of geraniol from geranyl diphosphate. This is Geraniol synthase, chloroplastic (GerS) from Cinnamomum tenuipile (Alseodaphne mollis).